Reading from the N-terminus, the 4543-residue chain is Low-density lipoprotein receptor-related protein 1 (4543 aa).

The signal sequence occupies residues 1–21; the sequence is MGPLLALAGCLLALLAAPAAR. At 22-4419 the chain is on the extracellular side; the sequence is ALEAPKTCSP…EFIVGEQQSG (4398 aa). LDL-receptor class A domains lie at 27–68 and 72–112; these read KTCS…ICPQ and SRCQ…HCRE. 6 disulfides stabilise this stretch: C29-C42, C36-C55, C49-C66, C74-C87, C81-C100, and C94-C110. The EGF-like 1 domain occupies 113–151; that stretch reads QLANCTALGCQHHCVPTLSGPACYCNNSFQLAEDRRSCK. The N-linked (GlcNAc...) asparagine glycan is linked to N116. Disulfide bonds link C117/C126, C122/C135, C137/C150, C156/C166, C162/C175, and C177/C190. N138 carries an N-linked (GlcNAc...) asparagine glycan. In terms of domain architecture, EGF-like 2; calcium-binding spans 152–191; sequence DFDECTVYGTCSQTCTNTEGSYTCSCVEGYLLQPDNRSCK. Residues N187 and N276 are each glycosylated (N-linked (GlcNAc...) asparagine). LDL-receptor class B repeat units lie at residues 294-336, 337-380, and 381-424; these read GNFY…DPAM, GKVF…DLVS, and RLVY…FENY. N359 is a glycosylation site (N-linked (GlcNAc...) asparagine). The N-linked (GlcNAc...) asparagine glycan is linked to N448. An EGF-like 3 domain is found at 476 to 522; that stretch reads RSHACEPDQFGKPGGCSDICLLGNSHKSRTCRCRSGFSLGSDGKSCK. 3 disulfide bridges follow: C480/C495, C491/C506, and C508/C521. LDL-receptor class B repeat units lie at residues 573 to 615, 616 to 661, 662 to 712, and 713 to 756; these read GFIY…DWMG, NNLY…DPLN, GWMY…DIPA, and KILY…YSSF. An N-linked (GlcNAc...) asparagine glycan is attached at N731. The EGF-like 4 domain maps to 801–841; sequence GSNKCRVNNGGCSSLCLATPRGRQCACAEDQILGADSVTCE. 33 cysteine pairs are disulfide-bonded: C805-C816, C812-C825, C827-C840, C852-C864, C859-C877, C871-C888, C893-C905, C900-C918, C912-C929, C934-C946, C941-C959, C953-C969, C974-C987, C982-C1000, C994-C1009, C1013-C1025, C1020-C1038, C1032-C1049, C1060-C1073, C1067-C1086, C1080-C1095, C1102-C1116, C1110-C1129, C1123-C1138, C1143-C1157, C1150-C1170, C1164-C1180, C1183-C1194, C1190-C1204, C1206-C1219, C1225-C1235, C1231-C1244, and C1246-C1259. LDL-receptor class A domains follow at residues 850–890, 891–931, 932–971, 972–1011, 1011–1051, 1058–1097, 1100–1140, and 1141–1180; these read PQCQ…LCHQ, HTCP…TCSA, RTCS…SCAY, PTCF…GCSH, HSCS…NCTN, GGCH…NCEG, HVCD…NCES, and LVCK…GELC. W869, D872, D874, D876, D882, and E883 together coordinate Ca(2+). A glycan (N-linked (GlcNAc...) asparagine) is linked at N926. Ca(2+) contacts are provided by W1030, D1033, D1035, D1037, D1043, and E1044. N1048 carries an N-linked (GlcNAc...) asparagine glycan. Positions 1078, 1081, 1083, 1085, 1091, and 1092 each coordinate Ca(2+). 2 N-linked (GlcNAc...) asparagine glycosylation sites follow: N1152 and N1153. 2 consecutive EGF-like domains span residues 1181–1220 and 1221–1260; these read DQCS…KTCQ and IQSY…ESCR. Residues N1193 and N1216 are each glycosylated (N-linked (GlcNAc...) asparagine). A glycan (N-linked (GlcNAc...) asparagine) is linked at N1305. LDL-receptor class B repeat units follow at residues 1307–1353, 1354–1396, 1397–1443, 1444–1488, and 1489–1529; these read SSLY…DWIA, GNIY…DPRY, GILF…DYLE, KRIL…YGGE, and VYWT…YHPS. An N-linked (GlcNAc...) asparagine glycan is attached at N1509. The EGF-like 7 domain maps to 1534 to 1577; the sequence is APNPCEANGGKGPCSHLCLINYNRTLSCACPHLMKLDKDNTTCY. 3 cysteine pairs are disulfide-bonded: C1538–C1551, C1547–C1561, and C1563–C1576. N-linked (GlcNAc...) asparagine glycans are attached at residues N1556, N1573, N1614, and N1643. LDL-receptor class B repeat units follow at residues 1625 to 1667, 1668 to 1711, 1712 to 1751, and 1752 to 1796; these read QRIY…DWVS, RNLF…HPLH, GKLY…DYPE, and SKLY…MGDK. N-linked (GlcNAc...) asparagine glycosylation is found at N1721, N1731, N1761, and N1823. The 42-residue stretch at 1842-1883 folds into the EGF-like 8 domain; the sequence is GSNPCSVNNGDCSQLCLPTSETSRSCMCTAGYSLKSGQQSCE. 3 disulfide bridges follow: C1846-C1857, C1853-C1867, and C1869-C1882. N-linked (GlcNAc...) asparagine glycosylation occurs at N1929. LDL-receptor class B repeat units follow at residues 1930-1972, 1973-2015, 2016-2059, and 2060-2103; these read DTIY…DWIA, GNIY…HPEK, GYLF…DYED, and GKLY…FEDY. N-linked (GlcNAc...) asparagine glycosylation is found at N1991 and N2044. N2113 and N2123 each carry an N-linked (GlcNAc...) asparagine glycan. Residues 2151–2191 enclose the EGF-like 9 domain; the sequence is GTNVCAQNNGGCQQLCLFRGGGRRTCACAHGMLSEDGVSCR. 3 cysteine pairs are disulfide-bonded: C2155–C2166, C2162–C2176, and C2178–C2190. 5 LDL-receptor class B repeats span residues 2247–2288, 2289–2337, 2338–2382, 2383–2425, and 2426–2467; these read NRIF…HRGW, DTLY…DECQ, NLMF…DHRA, EKIY…YGDY, and IFWT…VAND. N2466 is a glycosylation site (N-linked (GlcNAc...) asparagine). One can recognise an EGF-like 10 domain in the interval 2472–2512; that stretch reads ELSPCRVNNGGCQDLCLLTPKGHVNCSCRGERVLQEDFTCK. 3 disulfides stabilise this stretch: C2476–C2487, C2483–C2497, and C2499–C2511. Residue N2496 is glycosylated (N-linked (GlcNAc...) asparagine). N2515 is a glycosylation site (N-linked (GlcNAc...) asparagine). 7 consecutive LDL-receptor class A domains span residues 2516-2557, 2558-2596, 2597-2635, 2636-2684, 2688-2730, 2730-2769, and 2770-2812; these read STCN…YCSS, RKCK…PCNK, TSCA…NCTA, TDCS…NCPG, PKCP…RQDK, KFCY…RCRL, and TTCS…GCLY. 6 cysteine pairs are disulfide-bonded: C2518–C2531, C2526–C2544, C2538–C2555, C2560–C2572, C2567–C2585, and C2579–C2594. The N-linked (GlcNAc...) asparagine glycan is linked to N2595. 15 disulfides stabilise this stretch: C2599/C2611, C2606/C2624, C2618/C2633, C2638/C2660, C2654/C2673, C2667/C2682, C2690/C2702, C2697/C2715, C2709/C2724, C2732/C2744, C2739/C2757, C2751/C2767, C2772/C2785, C2779/C2798, and C2792/C2810. Residues N2614 and N2632 are each glycosylated (N-linked (GlcNAc...) asparagine). Residue N2813 is glycosylated (N-linked (GlcNAc...) asparagine). LDL-receptor class A domains are found at residues 2814–2853, 2854–2897, and 2900–2938; these read NTCD…ECEY, PTCG…RCSS, and SKCN…NCFI. 15 disulfides stabilise this stretch: C2816-C2828, C2823-C2841, C2835-C2851, C2856-C2868, C2863-C2882, C2876-C2895, C2902-C2914, C2909-C2927, C2921-C2936, C2941-C2953, C2949-C2962, C2964-C2977, C2983-C2993, C2989-C3002, and C3004-C3018. An N-linked (GlcNAc...) asparagine glycan is attached at N2903. One can recognise an EGF-like 11 domain in the interval 2939-2978; the sequence is NECLNKKLSGCSQECEDLKIGYKCRCRPGFRLKDDGKTCI. The 41-residue stretch at 2979–3019 folds into the EGF-like 12; calcium-binding domain; the sequence is DIDECSTTYPCSQKCINTLGSYKCLCIEGYKLKPDNPTSCK. N-linked (GlcNAc...) asparagine glycosylation is found at N3045 and N3086. 5 LDL-receptor class B repeats span residues 3066-3110, 3111-3153, 3154-3197, 3198-3240, and 3241-3281; these read QMIY…DWVG, GNLY…DVQN, GYLY…DYIN, SRIY…FEDY, and IYWT…YHPY. N-linked (GlcNAc...) asparagine glycosylation occurs at N3176. N3261 is a glycosylation site (N-linked (GlcNAc...) asparagine). Positions 3287–3328 constitute an EGF-like 13 domain; the sequence is PNHPCKTNNAGCSNLCLLSPGGGHKCACPTNFYLGSDGKTCV. Cystine bridges form between C3291-C3302, C3298-C3312, and C3314-C3327. LDL-receptor class A domains follow at residues 3329–3368, 3369–3407, 3408–3447, 3448–3488, 3489–3530, 3531–3569, 3570–3608, 3608–3646, 3649–3689, 3690–3730, and 3736–3776; these read SNCT…DCPE, FKCR…NCDI, HVCL…DCPE, VTCA…NCTQ, MTCG…ECDE, RTCE…SCTP, RPCS…DCIP, PRCE…DCGT, RTCP…ECLK, FQCP…DCES, and KSCS…SCSH. N3330 carries N-linked (GlcNAc...) asparagine glycosylation. 38 disulfides stabilise this stretch: C3331–C3343, C3338–C3356, C3350–C3366, C3371–C3383, C3378–C3396, C3390–C3405, C3410–C3423, C3417–C3436, C3430–C3445, C3450–C3463, C3457–C3476, C3470–C3486, C3491–C3504, C3498–C3517, C3511–C3528, C3533–C3545, C3540–C3558, C3552–C3567, C3572–C3584, C3579–C3597, C3591–C3606, C3610–C3622, C3617–C3635, C3629–C3644, C3658–C3676, C3670–C3687, C3692–C3706, C3700–C3719, C3713–C3728, C3738–C3752, C3747–C3765, C3759–C3774, C3783–C3796, C3790–C3805, C3807–C3820, C3826–C3836, C3832–C3845, and C3847–C3858. A glycan (N-linked (GlcNAc...) asparagine) is linked at N3485. The N-linked (GlcNAc...) asparagine glycan is linked to N3659. 2 EGF-like domains span residues 3779 to 3821 and 3822 to 3859; these read KSYD…NSCQ and DVNE…NMCK. N-linked (GlcNAc...) asparagine glycosylation is present at N3786. N-linked (GlcNAc...) asparagine glycosylation is present at N3837. 4 LDL-receptor class B repeats span residues 3910–3952, 3969–4011, 4012–4055, and 4056–4100; these read NKIY…THLN, GNIY…DPLR, GTMY…DYHN, and ERLY…FEDY. A Recognition site for proteolytical processing motif is present at residues 3939-3942; that stretch reads RNRR. N3952 carries N-linked (GlcNAc...) asparagine glycosylation. Residues N4074 and N4124 are each glycosylated (N-linked (GlcNAc...) asparagine). EGF-like domains are found at residues 4146–4182, 4195–4231, 4231–4267, 4267–4303, 4303–4339, 4339–4374, and 4372–4409; these read VTNP…GTCV, TTDT…ERCQ, QINQ…SRCD, DQQV…DRCQ, QYQQ…AQCQ, QDNK…PSCL, and SCLT…MRCE. 21 cysteine pairs are disulfide-bonded: C4150/C4159, C4155/C4168, C4170/C4181, C4199/C4209, C4203/C4219, C4221/C4230, C4235/C4245, C4239/C4255, C4257/C4266, C4271/C4281, C4275/C4291, C4293/C4302, C4307/C4317, C4311/C4327, C4329/C4338, C4343/C4351, C4346/C4362, C4364/C4373, C4376/C4386, C4380/C4397, and C4399/C4408. The N-linked (GlcNAc...) asparagine glycan is linked to N4178. N4278 carries N-linked (GlcNAc...) asparagine glycosylation. Residues 4420 to 4443 traverse the membrane as a helical segment; the sequence is RTASIVIPILLLLLLLAVVAFAWY. At 4444-4543 the chain is on the cytoplasmic side; the sequence is KWRIKGAKGF…ADDDLTDPLA (100 aa). The NPXY motif signature appears at 4501–4506; it reads FTNPVY. A disordered region spans residues 4522–4543; it reads STDEKRELLARGADDDLTDPLA. Residues 4523 to 4535 are compositionally biased toward basic and acidic residues; it reads TDEKRELLARGAD.

This sequence belongs to the LDLR family. As to quaternary structure, binds vitellogenin and LRPAP1 (alpha 2-macroglobulin). In terms of processing, cleaved into a 85 kDa membrane-spanning subunit (LRP-85) and a 515 kDa large extracellular domain (LRP-515) that remains non-covalently associated. In terms of tissue distribution, somatic.

Its subcellular location is the membrane. It is found in the coated pit. Endocytic receptor involved in endocytosis and in phagocytosis of apoptotic cells. Involved in cellular lipid homeostasis. Involved in the plasma clearance of chylomicron remnants and activated LRPAP1 (alpha 2-macroglobulin), as well as the local metabolism of complexes between plasminogen activators and their endogenous inhibitors. Acts as an alpha-2-macroglobulin receptor. This is Low-density lipoprotein receptor-related protein 1 (LRP1) from Gallus gallus (Chicken).